The following is a 218-amino-acid chain: MKIVIADDHAVVRTGFSMILNYQEDMEVVATAADGVEAYQKVLEHRPDVLILDLSMPPGESGLIATSKISESFPDTKILILTMFDDEEYLFHVLKSGAKGYILKNSPDEQLILAVRTVYQGETYVDMKLTTSLVNEFVNQSQTDEVSSSSDPFKILSKRELEILPLIAKGYGNKDIAEKLFVSVKTVEAHKTHIMTKLNLKSKPELVEYALKKKLLEF.

In terms of domain architecture, Response regulatory spans 2–119 (KIVIADDHAV…QLILAVRTVY (118 aa)). 4-aspartylphosphate is present on D53. An HTH luxR-type domain is found at 149–214 (SSDPFKILSK…ELVEYALKKK (66 aa)). The segment at residues 173-192 (NKDIAEKLFVSVKTVEAHKT) is a DNA-binding region (H-T-H motif).

Post-translationally, phosphorylated by NreB.

The protein resides in the cytoplasm. In terms of biological role, member of the two-component regulatory system NreB/NreC involved in the control of dissimilatory nitrate/nitrite reduction in response to oxygen. Phosphorylated NreC binds to a GC-rich palindromic sequence at the promoters of the nitrate (narGHJI) and nitrite (nir) reductase operons, as well as the putative nitrate transporter gene narT, and activates their expression. This is Oxygen regulatory protein NreC (nreC) from Staphylococcus epidermidis (strain ATCC 35984 / DSM 28319 / BCRC 17069 / CCUG 31568 / BM 3577 / RP62A).